The sequence spans 170 residues: Probable chemoreceptor glutamine deamidase CheD 3 (170 aa).

This sequence belongs to the CheD family.

The catalysed reaction is L-glutaminyl-[protein] + H2O = L-glutamyl-[protein] + NH4(+). Probably deamidates glutamine residues to glutamate on methyl-accepting chemotaxis receptors (MCPs), playing an important role in chemotaxis. The polypeptide is Probable chemoreceptor glutamine deamidase CheD 3 (Dechloromonas aromatica (strain RCB)).